Reading from the N-terminus, the 548-residue chain is MAAKDVKFGNEARIKMLRGVNVLADAVKVTLGPKGRNVVLDKSFGAPSITKDGVSVAREIELEDKFENMGAQMVKEVASKANDAAGDGTTTATLLAQSIVNEGLKAVAAGMNPMDLKRGIDKAVISAVEELKNLSVPCSDSKAITQVGTISANADEKVGALIAEAMEKVGNDGVITVEEGTGLQNELEVVKGMQFDRGYLSPYFINKPETGVVELENPYILMADKKISNVREMLPILESVAKSGKPLLIISEDLEGEALATLVVNSTRGIVKVAAVKAPGFGDRRKAMLQDISVLTGGSVISEELAMDLEKSTLEDLGQAKRVVINKDTTTIIGGVGEKQAIQSRISQIPQEIQEATSDYDKEKLNERLAKLSGGVAGLKVSAATEVEMKEKKARVEDALHATRAAVEEGVVAGGGVALVRVAGKISNLRGHNEDQNVGIRVALRAMEAPLRQIVSNSGEEPSVVTNNVKDGKGNYGYNAATDEYGDMIDFGILDPTKVTRSALQYAASVAGLMITTECMVTDLPKEDKTSDASSSPAGGMGGMGGMM.

ATP is bound by residues Thr-30–Pro-33, Lys-51, Asp-87–Thr-91, Gly-415, Asn-479–Ala-481, and Asp-495. The segment at Pro-525 to Met-548 is disordered. Residues Gly-539–Met-548 are compositionally biased toward gly residues.

This sequence belongs to the chaperonin (HSP60) family. As to quaternary structure, forms a cylinder of 14 subunits composed of two heptameric rings stacked back-to-back. Interacts with the co-chaperonin GroES.

Its subcellular location is the cytoplasm. It carries out the reaction ATP + H2O + a folded polypeptide = ADP + phosphate + an unfolded polypeptide.. In terms of biological role, together with its co-chaperonin GroES, plays an essential role in assisting protein folding. The GroEL-GroES system forms a nano-cage that allows encapsulation of the non-native substrate proteins and provides a physical environment optimized to promote and accelerate protein folding. The chain is Chaperonin GroEL from Buchnera aphidicola subsp. Rhopalosiphum padi.